Here is a 146-residue protein sequence, read N- to C-terminus: UPF0178 protein CTC_02403 (146 aa).

It belongs to the UPF0178 family.

This Clostridium tetani (strain Massachusetts / E88) protein is UPF0178 protein CTC_02403.